Reading from the N-terminus, the 370-residue chain is F-box protein At3g20690 (370 aa).

Positions M1–K45 constitute an F-box domain.

The protein is F-box protein At3g20690 of Arabidopsis thaliana (Mouse-ear cress).